Consider the following 789-residue polypeptide: LPS-assembly protein LptD (789 aa).

Positions 1–39 (MPPRQLSQTTPSCAVVPRKRRLVAALIAVPGLMPALAHA) are cleaved as a signal peptide.

It belongs to the LptD family. In terms of assembly, component of the lipopolysaccharide transport and assembly complex. Interacts with LptE and LptA.

It localises to the cell outer membrane. In terms of biological role, together with LptE, is involved in the assembly of lipopolysaccharide (LPS) at the surface of the outer membrane. This is LPS-assembly protein LptD from Paraburkholderia xenovorans (strain LB400).